The primary structure comprises 85 residues: MSQRGNRKTQVGVVVSDKMDKTVVVRVSHLVKHPVYNKYIKRSVKYKAHDTDNSCKTGDRVLIVETRPLSKDKRWKVRQIIDRVE.

The protein belongs to the universal ribosomal protein uS17 family. Part of the 30S ribosomal subunit.

Functionally, one of the primary rRNA binding proteins, it binds specifically to the 5'-end of 16S ribosomal RNA. The sequence is that of Small ribosomal subunit protein uS17 from Geobacter sulfurreducens (strain ATCC 51573 / DSM 12127 / PCA).